Here is a 215-residue protein sequence, read N- to C-terminus: Dual specificity phosphatase 29 (215 aa).

The 149-residue stretch at 53–201 (HVNEVWPRLH…LRELDKQLVK (149 aa)) folds into the Tyrosine-protein phosphatase domain. A substrate-binding site is contributed by 145–152 (HCAMGRSR). Residue C146 is the Phosphocysteine intermediate of the active site.

Belongs to the protein-tyrosine phosphatase family. Non-receptor class dual specificity subfamily. Homodimer. Interacts with PRKAA2.

Its subcellular location is the cytoplasm. The protein localises to the nucleus. It catalyses the reaction O-phospho-L-tyrosyl-[protein] + H2O = L-tyrosyl-[protein] + phosphate. The catalysed reaction is O-phospho-L-seryl-[protein] + H2O = L-seryl-[protein] + phosphate. It carries out the reaction O-phospho-L-threonyl-[protein] + H2O = L-threonyl-[protein] + phosphate. Dual specificity phosphatase able to dephosphorylate phosphotyrosine, phosphoserine and phosphothreonine residues within the same substrate, with a preference for phosphotyrosine as a substrate. Involved in the modulation of intracellular signaling cascades. In skeletal muscle regulates systemic glucose homeostasis by activating, AMPK, an energy sensor protein kinase. Affects MAP kinase signaling though modulation of the MAPK1/2 cascade in skeletal muscle promoting muscle cell differentiation, development and atrophy. This is Dual specificity phosphatase 29 (Dusp29) from Rattus norvegicus (Rat).